Reading from the N-terminus, the 1322-residue chain is WD repeat-containing protein 17 (1322 aa).

5 WD repeats span residues 81–121 (EHKK…VIAK), 123–164 (DSTK…SGVI), 171–211 (SFLS…QKHV), 221–261 (DEED…CITT), and 266–307 (SAAA…PIDN). The interval 328–352 (KFSVQSPTKNHYTSSTSEAVPPPTL) is disordered. The span at 330-345 (SVQSPTKNHYTSSTSE) shows a compositional bias: polar residues. WD repeat units lie at residues 391 to 431 (GHVE…AVYT), 434 to 474 (GNEG…IIQR), 478 to 518 (HGTN…LHKY), 519 to 559 (KHPA…DQPL), 564 to 604 (GHTA…CINI), 607 to 647 (GHTA…CVDT), and 650 to 690 (DHGA…TPVQ).

The chain is WD repeat-containing protein 17 (WDR17) from Homo sapiens (Human).